Consider the following 226-residue polypeptide: ATP-dependent dethiobiotin synthetase BioD (226 aa).

12-17 (GIGKTV) provides a ligand contact to ATP. Thr16 serves as a coordination point for Mg(2+). Residue Lys37 is part of the active site. Thr41 lines the substrate pocket. ATP is bound by residues Asp49, 108 to 111 (EGAG), and 197 to 199 (PAG). Asp49 and Glu108 together coordinate Mg(2+).

It belongs to the dethiobiotin synthetase family. As to quaternary structure, homodimer. Mg(2+) is required as a cofactor.

It localises to the cytoplasm. The catalysed reaction is (7R,8S)-7,8-diammoniononanoate + CO2 + ATP = (4R,5S)-dethiobiotin + ADP + phosphate + 3 H(+). Its pathway is cofactor biosynthesis; biotin biosynthesis; biotin from 7,8-diaminononanoate: step 1/2. Functionally, catalyzes a mechanistically unusual reaction, the ATP-dependent insertion of CO2 between the N7 and N8 nitrogen atoms of 7,8-diaminopelargonic acid (DAPA, also called 7,8-diammoniononanoate) to form a ureido ring. This is ATP-dependent dethiobiotin synthetase BioD from Mycolicibacterium vanbaalenii (strain DSM 7251 / JCM 13017 / BCRC 16820 / KCTC 9966 / NRRL B-24157 / PYR-1) (Mycobacterium vanbaalenii).